The primary structure comprises 318 residues: MMSTLFPTLNLNKDDQLPNFTVSELNDWALITMIGADKKSYLQGQVTCDVVSLAQDEITFGGHCDAKGKLWSIFQLFHHNDGYALFQRKSAIETELTEIKKYAVFSKVDISISDDILLGFTGDKALEWINQHTDSNANVRVSKFGTFAKVSDTQWLLVTTDDKKEELLSLLSEATLCDEAIWSLHHIKHALPQLDDQLCNEHIPQALNLQAINGISFKKGCYTGQETVARAKYRGINKRAMYLLSGISEAQPSAGDAIERSVGENWRKGGTIVSAYRFEDGYTLALAILPNDLDEDTQFKLQESIWEKVELPYTLNDE.

Residues Trp28 and Trp182 each coordinate folate.

Belongs to the tRNA-modifying YgfZ family.

It is found in the cytoplasm. Folate-binding protein involved in regulating the level of ATP-DnaA and in the modification of some tRNAs. It is probably a key factor in regulatory networks that act via tRNA modification, such as initiation of chromosomal replication. This is tRNA-modifying protein YgfZ from Aliivibrio fischeri (strain MJ11) (Vibrio fischeri).